Reading from the N-terminus, the 370-residue chain is MEKELDLSQYSVRTDLAVEAKDIALENQPKPNNQSEIKGVIVKEKEEQGVKISMVEITEEGAEAIGKKKGRYVTLESVGIREQDTEKQEAMEEVFAKELNFFIKSLNIPDDASCLVVGLGNLSVTPDALGPKAVDNLLITRHLFELQPESVQDGFRPVSAIVPGVMGMTGIETSDIIFGVVKKVNPDFIIAIDALAARSIERVNATIQISDSGIHPGSGVGNKRKEISYETLGIPVIAIGIPTVVDAVSITSDTIDFILKHFGREMKEQGKPSKSLLPSGMTFGEKKKLTEDDLPNEEQRQTYLGMIGTLPDEEKRRLIHEVLAPLGHNLMVTPKEVDMFIEDMANVVAGGLNAALHHEVDQENFGAYTH.

Positions 1-15 (MEKELDLSQYSVRTD) are excised as a propeptide.

This sequence belongs to the peptidase A25 family. In terms of assembly, homotetramer. In terms of processing, autoproteolytically processed. The inactive tetrameric zymogen termed p46 autoprocesses to a smaller form termed p41, which is active only during spore germination.

The enzyme catalyses Endopeptidase action with P4 Glu or Asp, P1 preferably Glu &gt; Asp, P1' hydrophobic and P2' Ala.. Functionally, initiates the rapid degradation of small, acid-soluble proteins during spore germination. This chain is Germination protease (gpr), found in Priestia megaterium (strain ATCC 12872 / QMB1551) (Bacillus megaterium).